We begin with the raw amino-acid sequence, 351 residues long: Nicotinate-nucleotide--dimethylbenzimidazole phosphoribosyltransferase (351 aa).

Residue E318 is the Proton acceptor of the active site.

This sequence belongs to the CobT family.

The enzyme catalyses 5,6-dimethylbenzimidazole + nicotinate beta-D-ribonucleotide = alpha-ribazole 5'-phosphate + nicotinate + H(+). The protein operates within nucleoside biosynthesis; alpha-ribazole biosynthesis; alpha-ribazole from 5,6-dimethylbenzimidazole: step 1/2. Functionally, catalyzes the synthesis of alpha-ribazole-5'-phosphate from nicotinate mononucleotide (NAMN) and 5,6-dimethylbenzimidazole (DMB). In Shewanella frigidimarina (strain NCIMB 400), this protein is Nicotinate-nucleotide--dimethylbenzimidazole phosphoribosyltransferase.